The chain runs to 185 residues: Pre-histone-like nucleoprotein (185 aa).

Position 2 is an N-acetylserine; by host (serine 2). The propeptide occupies serine 2–glycine 23. At threonine 55 the chain carries Phosphothreonine; by host. At serine 172 the chain carries Phosphoserine; by host. The Nuclear localization signal signature appears at arginine 175–serine 185.

It belongs to the adenoviridae histone-like nucleoprotein family. As to quaternary structure, interacts with the core-capsid bridging protein; this interaction bridges the virus core to the capsid. Interacts with host NPM1; this interaction might play a role in placing the pre-histone-like nucleoprotein on the viral DNA or regulating viral gene expression. Interacts with host HMGB1; this interaction inhibits host immune response. In terms of processing, cleaved near the N-terminus by the viral protease during virion maturation to form the mature protein.

The protein resides in the virion. It localises to the host nucleus. Its subcellular location is the host nucleolus. Its function is as follows. Plays a role in the inhibition of host immune response within the nucleus. Interacts with cellular nucleosomes and immobilizes the host immune danger signal HMGB1 on chromatin. In turn, prevents HMGB1 release out of the cell and thus decreases inflammation. Also plays a role in the wrapping and condensation of the viral DNA. May also promote viral genome import into the nucleus. The sequence is that of Pre-histone-like nucleoprotein from Human adenovirus F serotype 40 (HAdV-40).